A 350-amino-acid polypeptide reads, in one-letter code: Erythronate-4-phosphate dehydrogenase (350 aa).

Serine 45 and threonine 66 together coordinate substrate. NAD(+) is bound by residues 124–125 (QV), aspartate 144, 203–205 (ASR), and aspartate 226. Arginine 205 is a catalytic residue. Glutamate 231 is a catalytic residue. The active-site Proton donor is the histidine 248. Glycine 251 provides a ligand contact to NAD(+).

This sequence belongs to the D-isomer specific 2-hydroxyacid dehydrogenase family. PdxB subfamily. In terms of assembly, homodimer.

The protein resides in the cytoplasm. The catalysed reaction is 4-phospho-D-erythronate + NAD(+) = (R)-3-hydroxy-2-oxo-4-phosphooxybutanoate + NADH + H(+). The protein operates within cofactor biosynthesis; pyridoxine 5'-phosphate biosynthesis; pyridoxine 5'-phosphate from D-erythrose 4-phosphate: step 2/5. Its function is as follows. Catalyzes the oxidation of erythronate-4-phosphate to 3-hydroxy-2-oxo-4-phosphonooxybutanoate. This Legionella pneumophila (strain Lens) protein is Erythronate-4-phosphate dehydrogenase.